Here is a 464-residue protein sequence, read N- to C-terminus: Argininosuccinate lyase (464 aa).

Belongs to the lyase 1 family. Argininosuccinate lyase subfamily.

The protein resides in the cytoplasm. It carries out the reaction 2-(N(omega)-L-arginino)succinate = fumarate + L-arginine. It participates in amino-acid biosynthesis; L-arginine biosynthesis; L-arginine from L-ornithine and carbamoyl phosphate: step 3/3. The chain is Argininosuccinate lyase from Azotobacter vinelandii (strain DJ / ATCC BAA-1303).